Here is a 215-residue protein sequence, read N- to C-terminus: Ceramide-1-phosphate transfer protein (215 aa).

Residues Asp-57, Lys-61, Arg-107, Arg-111, and His-151 each contribute to the an N-acylsphingoid base 1-phosphate site.

Belongs to the GLTP family.

The protein localises to the cytoplasm. It localises to the cytosol. The protein resides in the golgi apparatus. Its subcellular location is the trans-Golgi network membrane. It is found in the cell membrane. The protein localises to the endosome membrane. It localises to the nucleus outer membrane. It catalyses the reaction N-(hexadecanoyl)-sphing-4-enine-1-phosphate(in) = N-(hexadecanoyl)-sphing-4-enine-1-phosphate(out). The enzyme catalyses N-(9Z-octadecenoyl)-sphing-4-enine-1-phosphate(in) = N-(9Z-octadecenoyl)-sphing-4-enine-1-phosphate(out). Mediates the intracellular transfer of ceramide-1-phosphate (C1P) between organelle membranes and the cell membrane. Required for normal structure of the Golgi stacks. Can bind phosphoceramides with a variety of aliphatic chains, but has a preference for lipids with saturated C16:0 or monounsaturated C18:1 aliphatic chains, and is inefficient with phosphoceramides containing lignoceryl (C24:0). Plays a role in the regulation of the cellular levels of ceramide-1-phosphate, and thereby contributes to the regulation of phospholipase PLA2G4A activity and the release of arachidonic acid. Has no activity with galactosylceramide, lactosylceramide, sphingomyelin, phosphatidylcholine, phosphatidic acid and ceramide. C1P transfer is stimulated by phosphatidylserine in C1P source vesicles. Regulates autophagy and pyroptosis, but not apoptosis. The protein is Ceramide-1-phosphate transfer protein (cptp) of Xenopus tropicalis (Western clawed frog).